The sequence spans 650 residues: Macrolide export ATP-binding/permease protein MacB (650 aa).

The 237-residue stretch at Ile2 to Glu238 folds into the ABC transporter domain. An ATP-binding site is contributed by Gly38–Ser45. 4 consecutive transmembrane segments (helical) span residues Gly267–Gly287, Ile531–Val551, Ile580–Leu600, and Val610–Phe630.

The protein belongs to the ABC transporter superfamily. Macrolide exporter (TC 3.A.1.122) family. In terms of assembly, homodimer.

The protein resides in the cell inner membrane. In terms of biological role, non-canonical ABC transporter that contains transmembrane domains (TMD), which form a pore in the inner membrane, and an ATP-binding domain (NBD), which is responsible for energy generation. Confers resistance against macrolides. The sequence is that of Macrolide export ATP-binding/permease protein MacB from Bdellovibrio bacteriovorus (strain ATCC 15356 / DSM 50701 / NCIMB 9529 / HD100).